Reading from the N-terminus, the 123-residue chain is uncharacterized protein (123 aa).

Residues 1-20 (MARTLALRASAGLVAGMAMA) form the signal peptide.

This is an uncharacterized protein from Mycobacterium bovis (strain ATCC BAA-935 / AF2122/97).